The primary structure comprises 922 residues: Band 3 anion transport protein (922 aa).

Disordered stretches follow at residues 1 to 36 (MEGP…TMSN) and 355 to 389 (QHPD…LRTR). Residues 1–416 (MEGPGQDTED…LSDIRDALNP (416 aa)) are Cytoplasmic-facing. Over residues 10–26 (DALRRSLDPEGYEDTKG) the composition is skewed to basic and acidic residues. Residues 27 to 36 (SRTSLGTMSN) are compositionally biased toward polar residues. A helical membrane pass occupies residues 417–440 (QCLAAVIFIYFAALSPAITFGGLL). The Extracellular segment spans residues 441–448 (GEKTRGMM). A helical membrane pass occupies residues 449 to 469 (GVSELLLSTSVQCLLFSLLSA). Residues 470 to 472 (QPL) are Cytoplasmic-facing. A discontinuously helical membrane pass occupies residues 473-489 (LVVGFSGPLLVFEEAFF). Residues 490–498 (RFCEDHGLE) lie on the Extracellular side of the membrane. The helical transmembrane segment at 499–519 (YIVGRVWIGFWLILLVLLVVA) threads the bilayer. Over 520 to 531 (CEGTVLVRYLSR) the chain is Cytoplasmic. A helical membrane pass occupies residues 532–554 (YTQEIFSFLISLIFIYETFAKLV). The Extracellular portion of the chain corresponds to 555-581 (TIFEAHPLQQSYDTDVSTEPSVPKPNT). A helical membrane pass occupies residues 582 to 602 (ALLSLVLMAGTFFLALFLRQF). Residues 603–613 (KNSVFLPGKVR) are Cytoplasmic-facing. Residues 614–634 (RLIGDFGVPISIFVMALADFF) form a helical membrane-spanning segment. Topologically, residues 635 to 674 (IKDTYTQKLKVPRGLEVTNGTARGWFIHPMGSATPFPIWM) are extracellular. A glycan (N-linked (GlcNAc...) asparagine) is linked at Asn653. The chain crosses the membrane as a helical span at residues 675 to 695 (MFASPVPALLVFILIFLETQI). Over 696–711 (TTLIVSKPERKLVKGS) the chain is Cytoplasmic. Residues 712-730 (GFHLDLLLIVAMGGLAALF) form a helical membrane-spanning segment. The discontinuously helical transmembrane segment at 731–748 (GMPWLSATTVRTITHANA) threads the bilayer. Over 749 to 771 (LTVVGKSAVPGERAHIVEVKEQR) the chain is Cytoplasmic. The next 2 helical transmembrane spans lie at 772–792 (LSGL…PILK) and 793–811 (YIPL…VTSL). Over 812-849 (FGIQLFDRILLLLMPPKYHPKEPYVTRVKTWRITSSPL) the chain is Cytoplasmic. The discontinuously helical intramembrane region spans 850 to 880 (TQILVVALLWGVKVSPASLRCPFVLVLTVPL). Over 881-922 (RRLLLPRIFSEIELKCLDTDDAVVTFEEAEGQDVYNEVQMPS) the chain is Cytoplasmic.

The protein belongs to the anion exchanger (TC 2.A.31) family. In terms of assembly, a dimer in solution, it spans the membrane asymmetrically and appears to be tetrameric. Erythrocytes.

Its subcellular location is the cell membrane. The protein resides in the basolateral cell membrane. It carries out the reaction hydrogencarbonate(in) + chloride(out) = hydrogencarbonate(out) + chloride(in). Its function is as follows. Functions both as a transporter that mediates electroneutral anion exchange across the cell membrane and as a structural protein. Major integral membrane glycoprotein of the erythrocyte membrane; required for normal flexibility and stability of the erythrocyte membrane and for normal erythrocyte shape via the interactions of its cytoplasmic domain with cytoskeletal proteins, glycolytic enzymes, and hemoglobin. Functions as a transporter that mediates the 1:1 exchange of inorganic anions across the erythrocyte membrane. Mediates chloride-bicarbonate exchange in the kidney, and is required for normal acidification of the urine. In Gallus gallus (Chicken), this protein is Band 3 anion transport protein (SLC4A1).